We begin with the raw amino-acid sequence, 1351 residues long: Bromodomain-containing protein 4A (1351 aa).

Disordered stretches follow at residues 1 to 23, 35 to 58, 168 to 244, 285 to 368, 478 to 638, 700 to 799, and 821 to 1334; these read MSSE…GIEG, PQPQ…QPKR, ETEL…RPPA, AAQP…DTKT, EPEE…PMSY, CLRK…LDSS, and PDLP…PSID. The Bromo 1 domain maps to 58–164; that stretch reads RQTNQLQYLL…KLFLQKISEM (107 aa). The span at 208–219 shows a compositional bias: low complexity; it reads VKPPVTPVSKPS. A compositionally biased stretch (pro residues) spans 220-235; that stretch reads TPTPPTVTRAPTPPQT. The segment covering 327–343 has biased composition (basic and acidic residues); sequence PRKENGRQIRPTKKTEV. Positions 349 to 359 are enriched in pro residues; sequence PAPPVLHPQPA. Residues 366–475 form the Bromo 2 domain; sequence TKTSEQLRYC…DVFEMRFAKM (110 aa). Pro residues predominate over residues 482–504; the sequence is APAPVPSLAPGPPAPSIKGPPPT. Residues 504 to 522 are NPS region; it reads TSSDSSSDSTSDSESSSDS. Residues 505–517 are compositionally biased toward low complexity; the sequence is SSDSSSDSTSDSE. The interval 543–598 is BID region; it reads QLAALSQPQPNKPKKKEREKRKEKHKRKEEVEEPRKGRIREPPAKKPKKSVQGSGG. Basic residues predominate over residues 554–569; that stretch reads KPKKKEREKRKEKHKR. The segment covering 570–586 has biased composition (basic and acidic residues); sequence KEEVEEPRKGRIREPPA. Pro residues predominate over residues 607-621; that stretch reads PPPAPRPARPAPPSA. In terms of domain architecture, NET spans 624-708; it reads ESSEEETQRC…SCLRKKRKSQ (85 aa). Positions 629–638 are enriched in basic and acidic residues; the sequence is ETQRCRPMSY. Positions 725 to 738 are enriched in low complexity; it reads SSSESESSSESSTS. Positions 751-767 are enriched in basic residues; it reads QKKKGHSGRESRKHHHP. Residues 788-799 are compositionally biased toward low complexity; sequence PSYPLPSSLDSS. Positions 872–890 are enriched in pro residues; the sequence is PAMPPSASPPPPAPQPPQQ. The segment covering 892 to 902 has biased composition (basic residues); that stretch reads HVHHHHHHHAQ. The span at 927–953 shows a compositional bias: polar residues; the sequence is LQKSQQPPTQSPIHSLLTSVKVQSQTP. Residues 968–983 show a composition bias toward pro residues; sequence VYPPPPSTATTAPPPA. Composition is skewed to low complexity over residues 994-1003 and 1011-1028; these read PVVPQQLPAG and QQQQ…SHQQ. A C-terminal (CTD) region region spans residues 1051–1350; that stretch reads RQQKQETYPG…LMEIFEQNLF (300 aa). Residues 1075–1089 are compositionally biased toward pro residues; it reads PPVPPYPGLTHPPSP. Composition is skewed to basic and acidic residues over residues 1150–1161 and 1176–1197; these read PRPDLKKMDGGR and PEKE…DIKI. Positions 1214–1224 are enriched in polar residues; that stretch reads PTSAGKSTSDS. A compositionally biased stretch (basic and acidic residues) spans 1226-1284; the sequence is ELFRRQAREKEERERALKLQAEQAERVRREQDRMSRTREDDEVQDQARKAHEEARRRQE. Positions 1301-1310 are enriched in low complexity; it reads SPAQSSQPMM. Positions 1311–1323 are enriched in basic and acidic residues; sequence DQREMARKREQER.

It belongs to the BET family.

It is found in the nucleus. The protein resides in the chromosome. Functionally, chromatin reader protein that recognizes and binds acetylated histones and plays a key role in transmission of epigenetic memory across cell divisions and transcription regulation. Remains associated with acetylated chromatin throughout the entire cell cycle and provides epigenetic memory for postmitotic G1 gene transcription by preserving acetylated chromatin status and maintaining high-order chromatin structure. During interphase, plays a key role in regulating the transcription of signal-inducible genes by associating with the P-TEFb complex and recruiting it to promoters. This is Bromodomain-containing protein 4A (brd4-a) from Xenopus laevis (African clawed frog).